A 754-amino-acid polypeptide reads, in one-letter code: Putative sulfate transporter YPR003C (754 aa).

The tract at residues 1 to 91 (MTSNNSLLGR…NTSNTNNNDS (91 aa)) is disordered. The Cytoplasmic segment spans residues 1–118 (MTSNNSLLGR…SWLPEYTFNK (118 aa)). The span at 25 to 45 (RSVDQRDTFSDNFDYDKDSSN) shows a compositional bias: basic and acidic residues. The span at 65-89 (NSRSGCTNNTNNTNNTSNTSNTNNN) shows a compositional bias: low complexity. Residues 119-139 (LWGDVIAGISVASFQIPLALS) traverse the membrane as a helical segment. Topologically, residues 140-146 (YTTSIAH) are lumenal. A helical transmembrane segment spans residues 147-167 (VPPLCGLYSLAISPFVYGILG). The Cytoplasmic segment spans residues 168–172 (SVPQM). A helical transmembrane segment spans residues 173–193 (IVGPESAISLVVGQAVESITL). Topologically, residues 194 to 199 (HKENVS) are lumenal. The helical transmembrane segment at 200-220 (LIDISTVITFVSGTILLFSGI) threads the bilayer. Topologically, residues 221–232 (SRFGFLGNVLSK) are cytoplasmic. A helical membrane pass occupies residues 233 to 253 (ALLRGFISSVGLVMIINSLIS). The Lumenal segment spans residues 254-282 (ELKLDKFLVSLPQHYHTPFEKILFLIDYA). Residues 283–303 (PAQYHIPTAIFSGCCLIVLFL) form a helical membrane-spanning segment. Residues 304-317 (TRLLKRKLMKYHKS) are Cytoplasmic-facing. Residues 318 to 338 (AIFFPDILLVVIVTILISMKF) form a helical membrane-spanning segment. Residues 339–370 (NLKHRYGISIIGDFSMDNFDELKNPLTRPRRK) are Lumenal-facing. The helical transmembrane segment at 371-391 (LIPDLFSASLIVAMLGFFEST) threads the bilayer. Topologically, residues 392–410 (TASKSLGTTYNLTVSSNRE) are cytoplasmic. A helical membrane pass occupies residues 411–431 (LVALGFMNIVISLFGALPAFG). Over 432-450 (GYGRSKINALSGAQSVMSG) the chain is Lumenal. Residues 451 to 471 (VFMGVITLITMNLLLQFVHYI) form a helical membrane-spanning segment. At 472–474 (PNC) the chain is on the cytoplasmic side. Residues 475–495 (VLSVITTIIGISLLEEVPGDI) traverse the membrane as a helical segment. The Lumenal segment spans residues 496-517 (KFHLRCGGFSELFVFAVTFCTT). A helical membrane pass occupies residues 518 to 538 (IFYSIEAGICIGCVYSIINII). Residues 539 to 754 (KHSAKSRIQI…SNTLFNSSLV (216 aa)) are Cytoplasmic-facing. The 152-residue stretch at 574–725 (DVEGTEEIEG…DSIDAALYEI (152 aa)) folds into the STAS domain.

It belongs to the SLC26A/SulP transporter (TC 2.A.53) family.

The protein localises to the endoplasmic reticulum membrane. Possible sulfate transporter. The polypeptide is Putative sulfate transporter YPR003C (Saccharomyces cerevisiae (strain ATCC 204508 / S288c) (Baker's yeast)).